Reading from the N-terminus, the 699-residue chain is MLKFREWSKEFFGRKLTIQYGKVAKQSSGAAWVQFGDSVVLATANISDRVIEGVDFVPLTVEYQEKFYAAGKIPGGFIKREGKPTESAILSARLIDRPIRPLFPKYLRNDVQLIVTVLSVDGDTPPDVTGIFAASLALNFSKIPFQGIVAGVRIGYVDGEFVIFPTEEQLKNSKLDIVVAGSKDAITMVEGEAKEVTEEEMVQALMVAHEAIKKLIEFEEEILREFNVEKMEIEEPKPKDELIGRFEELLVENELRKRLLIKEKLERSLKLKEYKEELISKIFEEFEIDDEEKLTQEMLLKELFDEKAKKLMRKIIINEGIRADGRTPEEIRPITCEVGVLPRTHGSALFTRGETQSLGIVTLGAPMEEQIVDTIMEEGTKRFILHYNFPPFSVGEVKPLRGPGRREIGHGHLAERALKAVAPDEEDFPYVVRVVSEILESNGSSSMATVCSGSLALMDAGVPIKTHVAGVAMGLIVDEENEVVLTDIQGLEDHWGDMDFKVAGTRNGITAFQMDCKIAGVGEELLKKALKQARVARMRILDIMFETIKEPRKSLSPYAPLIANIEIDPMKVGELIGPGGKVIKSIVKEFDVEISIDDVTGKVSVYGKDQNKVNQAIEYIKTLTREIEVGDMFEGKITRIEPYGLFVELMPGKIGLAHSSKLGNDSKEFRKKYKVGDVIKVVVVNIDDSGRIQLGKAEE.

Positions 493 and 499 each coordinate Mg(2+). A KH domain is found at 560–620 (PLIANIEIDP…NKVNQAIEYI (61 aa)). Positions 630-697 (GDMFEGKITR…DSGRIQLGKA (68 aa)) constitute an S1 motif domain.

Belongs to the polyribonucleotide nucleotidyltransferase family. It depends on Mg(2+) as a cofactor.

It localises to the cytoplasm. It carries out the reaction RNA(n+1) + phosphate = RNA(n) + a ribonucleoside 5'-diphosphate. Functionally, involved in mRNA degradation. Catalyzes the phosphorolysis of single-stranded polyribonucleotides processively in the 3'- to 5'-direction. In Thermosipho melanesiensis (strain DSM 12029 / CIP 104789 / BI429), this protein is Polyribonucleotide nucleotidyltransferase.